Consider the following 373-residue polypeptide: Quinolinate synthase (373 aa).

H46 and S63 together coordinate iminosuccinate. C109 contributes to the [4Fe-4S] cluster binding site. Iminosuccinate is bound by residues Y142–N144 and S163. C232 contacts [4Fe-4S] cluster. Residues H258–E260 and T275 each bind iminosuccinate. C324 contributes to the [4Fe-4S] cluster binding site.

The protein belongs to the quinolinate synthase family. Type 3 subfamily. [4Fe-4S] cluster serves as cofactor.

It is found in the cytoplasm. It carries out the reaction iminosuccinate + dihydroxyacetone phosphate = quinolinate + phosphate + 2 H2O + H(+). The protein operates within cofactor biosynthesis; NAD(+) biosynthesis; quinolinate from iminoaspartate: step 1/1. Its function is as follows. Catalyzes the condensation of iminoaspartate with dihydroxyacetone phosphate to form quinolinate. This Acidobacterium capsulatum (strain ATCC 51196 / DSM 11244 / BCRC 80197 / JCM 7670 / NBRC 15755 / NCIMB 13165 / 161) protein is Quinolinate synthase.